We begin with the raw amino-acid sequence, 181 residues long: Negative modulator of initiation of replication (181 aa).

Interaction with DNA regions lie at residues 87–88 (AV), 116–120 (RTRVY), and 150–156 (NTNTGRK).

The protein belongs to the SeqA family. As to quaternary structure, homodimer. Polymerizes to form helical filaments.

It localises to the cytoplasm. Its function is as follows. Negative regulator of replication initiation, which contributes to regulation of DNA replication and ensures that replication initiation occurs exactly once per chromosome per cell cycle. Binds to pairs of hemimethylated GATC sequences in the oriC region, thus preventing assembly of replication proteins and re-initiation at newly replicated origins. Repression is relieved when the region becomes fully methylated. The protein is Negative modulator of initiation of replication of Shigella flexneri.